Consider the following 64-residue polypeptide: Large ribosomal subunit protein bL35c (64 aa).

This sequence belongs to the bacterial ribosomal protein bL35 family.

Its subcellular location is the plastid. It localises to the chloroplast. The protein is Large ribosomal subunit protein bL35c of Trieres chinensis (Marine centric diatom).